The following is a 450-amino-acid chain: UDP-N-acetylmuramoylalanine--D-glutamate ligase (450 aa).

Residue 118 to 124 (GSNAKST) participates in ATP binding.

The protein belongs to the MurCDEF family.

It localises to the cytoplasm. It catalyses the reaction UDP-N-acetyl-alpha-D-muramoyl-L-alanine + D-glutamate + ATP = UDP-N-acetyl-alpha-D-muramoyl-L-alanyl-D-glutamate + ADP + phosphate + H(+). Its pathway is cell wall biogenesis; peptidoglycan biosynthesis. Cell wall formation. Catalyzes the addition of glutamate to the nucleotide precursor UDP-N-acetylmuramoyl-L-alanine (UMA). In Pseudomonas putida (strain ATCC 47054 / DSM 6125 / CFBP 8728 / NCIMB 11950 / KT2440), this protein is UDP-N-acetylmuramoylalanine--D-glutamate ligase.